The chain runs to 89 residues: Small ribosomal subunit protein uS15 (89 aa).

It belongs to the universal ribosomal protein uS15 family. As to quaternary structure, part of the 30S ribosomal subunit. Forms a bridge to the 50S subunit in the 70S ribosome, contacting the 23S rRNA.

In terms of biological role, one of the primary rRNA binding proteins, it binds directly to 16S rRNA where it helps nucleate assembly of the platform of the 30S subunit by binding and bridging several RNA helices of the 16S rRNA. Its function is as follows. Forms an intersubunit bridge (bridge B4) with the 23S rRNA of the 50S subunit in the ribosome. The chain is Small ribosomal subunit protein uS15 from Pasteurella multocida (strain Pm70).